A 566-amino-acid polypeptide reads, in one-letter code: APC membrane recruitment protein 2 (566 aa).

Disordered stretches follow at residues 120–176 (KKNG…PGLI), 192–237 (TQKP…SPCS), 277–307 (VTGC…GKKV), and 342–533 (MIPP…RTKI). Basic and acidic residues-rich tracts occupy residues 123 to 134 (GKSENVRGEQAE), 155 to 168 (SKKD…KEGA), and 192 to 204 (TQKP…KSTE). Basic and acidic residues-rich tracts occupy residues 364 to 377 (REVK…DRNA) and 389 to 411 (YRKE…RNSD). Residues 464 to 476 (PPLSHSHSKPLSP) are compositionally biased toward low complexity. Polar residues-rich tracts occupy residues 477-489 (VTTS…ASSN) and 504-517 (HTTN…SGSA).

Belongs to the Amer family.

The protein resides in the cell membrane. Functionally, negative regulator of the canonical Wnt signaling pathway involved in neuroectodermal patterning. Acts by specifically binding phosphatidylinositol 4,5-bisphosphate (PtdIns(4,5)P2), translocating to the cell membrane and interacting with key regulators of the canonical Wnt signaling pathway, such as components of the beta-catenin destruction complex. This chain is APC membrane recruitment protein 2 (amer2), found in Xenopus tropicalis (Western clawed frog).